A 246-amino-acid chain; its full sequence is Protein lin-37 homolog (246 aa).

M1 is modified (N-acetylmethionine). Glycyl lysine isopeptide (Lys-Gly) (interchain with G-Cter in SUMO2) cross-links involve residues K5 and K7. The segment covering 39-55 has biased composition (basic and acidic residues); sequence RLDEEAGKTPLDTHNKD. Disordered regions lie at residues 39–90 and 129–208; these read RLDE…GGPQ and VRER…TLIY. S135 and S138 each carry phosphoserine. The residue at position 167 (T167) is a Phosphothreonine. Residues S182 and S202 each carry the phosphoserine modification.

As to quaternary structure, component of the DREAM complex (also named LINC complex) at least composed of E2F4, E2F5, LIN9, LIN37, LIN52, LIN54, MYBL1, MYBL2, RBL1, RBL2, RBBP4, TFDP1 and TFDP2. The complex exists in quiescent cells where it represses cell cycle-dependent genes. It dissociates in S phase when LIN9, LIN37, LIN52 and LIN54 form a subcomplex that binds to MYBL2.

The chain is Protein lin-37 homolog (Lin37) from Mus musculus (Mouse).